Here is a 238-residue protein sequence, read N- to C-terminus: uncharacterized protein (238 aa).

An N-terminal signal peptide occupies residues 1-28; sequence MSRNSRGSGRYVFVVLACVFGYTRAVHA.

This is an uncharacterized protein from Treponema pallidum (strain Nichols).